The chain runs to 175 residues: NADH-ubiquinone oxidoreductase chain 6 (175 aa).

The next 6 helical transmembrane spans lie at 1–21 (MMAY…VGFS), 25–45 (SPIY…GIVM), 47–67 (FGGS…MLVV), 87–107 (AAVL…VLYV), 116–136 (VFNF…FGVF), and 149–169 (YGVW…LVIL).

The protein belongs to the complex I subunit 6 family. In terms of assembly, core subunit of respiratory chain NADH dehydrogenase (Complex I) which is composed of 45 different subunits.

The protein localises to the mitochondrion inner membrane. It catalyses the reaction a ubiquinone + NADH + 5 H(+)(in) = a ubiquinol + NAD(+) + 4 H(+)(out). In terms of biological role, core subunit of the mitochondrial membrane respiratory chain NADH dehydrogenase (Complex I) which catalyzes electron transfer from NADH through the respiratory chain, using ubiquinone as an electron acceptor. Essential for the catalytic activity and assembly of complex I. This chain is NADH-ubiquinone oxidoreductase chain 6 (MT-ND6), found in Ceratotherium simum (White rhinoceros).